Here is a 189-residue protein sequence, read N- to C-terminus: Potassium-transporting ATPase KdpC subunit (189 aa).

A helical transmembrane segment spans residues Pro-6–Val-26.

Belongs to the KdpC family. As to quaternary structure, the system is composed of three essential subunits: KdpA, KdpB and KdpC.

It localises to the cell inner membrane. Part of the high-affinity ATP-driven potassium transport (or Kdp) system, which catalyzes the hydrolysis of ATP coupled with the electrogenic transport of potassium into the cytoplasm. This subunit acts as a catalytic chaperone that increases the ATP-binding affinity of the ATP-hydrolyzing subunit KdpB by the formation of a transient KdpB/KdpC/ATP ternary complex. This chain is Potassium-transporting ATPase KdpC subunit, found in Geobacter sulfurreducens (strain ATCC 51573 / DSM 12127 / PCA).